The chain runs to 184 residues: Adenylate kinase (184 aa).

Position 12 to 17 (12 to 17 (GAGKGT)) interacts with ATP. Positions 32-61 (STGELLRKEIDLDTDLGKQVKDIMNRGELV) are NMP. Residues T33, R38, 59–61 (ELV), 85–88 (GYPR), and Q92 contribute to the AMP site. An LID region spans residues 126 to 132 (IRGRKDD). R127 contacts ATP. Residues R129 and R140 each coordinate AMP. Residue G168 participates in ATP binding.

The protein belongs to the adenylate kinase family. Monomer.

The protein resides in the cytoplasm. It carries out the reaction AMP + ATP = 2 ADP. Its pathway is purine metabolism; AMP biosynthesis via salvage pathway; AMP from ADP: step 1/1. Catalyzes the reversible transfer of the terminal phosphate group between ATP and AMP. Plays an important role in cellular energy homeostasis and in adenine nucleotide metabolism. The sequence is that of Adenylate kinase from Prochlorococcus marinus subsp. pastoris (strain CCMP1986 / NIES-2087 / MED4).